The following is a 961-amino-acid chain: Mitogen-activated protein kinase kinase kinase 13-A (961 aa).

The disordered stretch occupies residues L88–R118. The Protein kinase domain occupies I169–I410. ATP is bound by residues L175–V183 and K196. The active-site Proton acceptor is the D280. 2 leucine-zipper regions span residues V434 to L455 and L487 to V508. Positions R458–R497 form a coiled coil. Disordered regions lie at residues P513–S600, A615–Y637, and R799–D883. Positions S560 to S578 are enriched in low complexity. A compositionally biased stretch (basic residues) spans N584–N596. Residues E810 to V823 are compositionally biased toward acidic residues. Positions S811 to E824 are acidic. Over residues K837–V851 the composition is skewed to polar residues.

It belongs to the protein kinase superfamily. Ser/Thr protein kinase family.

It is found in the cytoplasm. It localises to the membrane. It carries out the reaction L-seryl-[protein] + ATP = O-phospho-L-seryl-[protein] + ADP + H(+). The catalysed reaction is L-threonyl-[protein] + ATP = O-phospho-L-threonyl-[protein] + ADP + H(+). Functionally, may have a role in the JNK signaling pathway. This Xenopus laevis (African clawed frog) protein is Mitogen-activated protein kinase kinase kinase 13-A (map3k13-a).